The following is a 382-amino-acid chain: Rubredoxin-NAD(+) reductase (382 aa).

FAD contacts are provided by residues 9–12 (TGLA), 33–34 (TA), K42, V80, E156, D275, V287, and K318.

Belongs to the FAD-dependent oxidoreductase family. As to quaternary structure, homodimer. The cofactor is FAD.

The protein resides in the cytoplasm. The enzyme catalyses 2 reduced [rubredoxin] + NAD(+) + H(+) = 2 oxidized [rubredoxin] + NADH. It functions in the pathway hydrocarbon metabolism; alkane degradation. In terms of biological role, involved in the hydrocarbon hydroxylating system, which transfers electrons from NADH to rubredoxin reductase and then through rubredoxin to alkane 1 monooxygenase. The protein is Rubredoxin-NAD(+) reductase (rubB) of Alcanivorax borkumensis (strain ATCC 700651 / DSM 11573 / NCIMB 13689 / SK2).